Here is a 133-residue protein sequence, read N- to C-terminus: Large ribosomal subunit protein bL21 (133 aa).

Residues 1 to 22 (MAEKPAAKPKAAAAKAEAKDQS) form a disordered region.

Belongs to the bacterial ribosomal protein bL21 family. As to quaternary structure, part of the 50S ribosomal subunit. Contacts protein L20.

This protein binds to 23S rRNA in the presence of protein L20. The chain is Large ribosomal subunit protein bL21 from Prochlorococcus marinus (strain MIT 9303).